Consider the following 422-residue polypeptide: Succinate--CoA ligase [ADP-forming] subunit beta, mitochondrial (422 aa).

A mitochondrion-targeting transit peptide spans 1 to 27 (MVRGSLGKLASRALSVAGKWQHQQLRR). In terms of domain architecture, ATP-grasp spans 36 to 279 (AELMGKYGIN…TTQEDPREVA (244 aa)). ATP is bound by residues Lys-75, 82–84 (GRG), and Glu-142. Mg(2+) contacts are provided by Asn-234 and Asp-248. Substrate is bound by residues Asn-299 and 356-358 (GIM).

Belongs to the succinate/malate CoA ligase beta subunit family. Heterodimer of an alpha and a beta subunit. Requires Mg(2+) as cofactor.

It localises to the mitochondrion. It catalyses the reaction succinate + ATP + CoA = succinyl-CoA + ADP + phosphate. It functions in the pathway carbohydrate metabolism; tricarboxylic acid cycle; succinate from succinyl-CoA (ligase route): step 1/1. Succinyl-CoA synthetase functions in the citric acid cycle (TCA), coupling the hydrolysis of succinyl-CoA to the synthesis of ATP and thus represents the only step of substrate-level phosphorylation in the TCA. The beta subunit provides nucleotide specificity of the enzyme and binds the substrate succinate, while the binding sites for coenzyme A and phosphate are found in the alpha subunit. The sequence is that of Succinate--CoA ligase [ADP-forming] subunit beta, mitochondrial from Oryza sativa subsp. japonica (Rice).